The chain runs to 3343 residues: Cadherin-3 (3343 aa).

Positions 1-26 (MTIRIFFSIFLLNHLIFFHLFNFTHQ) are cleaved as a signal peptide. N-linked (GlcNAc...) asparagine glycosylation occurs at Asn-22. Residues 27-3228 (FSEETIKFSV…LFSNFSNTTT (3202 aa)) are Extracellular-facing. 3 Cadherin domains span residues 28–117 (SEET…SPIF), 118–229 (PIDV…PPNF), and 242–330 (PNTK…EPNI). Asn-149, Asn-250, Asn-288, Asn-369, Asn-467, and Asn-612 each carry an N-linked (GlcNAc...) asparagine glycan. Positions 632–738 (ICQITEIHVL…EDVNDNVPKF (107 aa)) constitute a Cadherin 4 domain. Residues Asn-752, Asn-806, Asn-941, Asn-966, Asn-970, Asn-985, Asn-1042, Asn-1335, Asn-1425, Asn-1429, Asn-1557, Asn-1563, Asn-1597, Asn-1624, Asn-1695, and Asn-1702 are each glycosylated (N-linked (GlcNAc...) asparagine). The Cadherin 5 domain occupies 1279 to 1368 (RENELMFEIE…ADVNDNKPKI (90 aa)). Cadherin domains lie at 1545 to 1648 (DKAA…APRF), 1676 to 1756 (AEDL…TPEF), and 1757 to 1857 (ELSS…HPMI). Asn-1895 and Asn-1900 each carry an N-linked (GlcNAc...) asparagine glycan. 3 consecutive Cadherin domains span residues 1954–2045 (TVSV…SPRF), 2046–2145 (DQQL…NAPR), and 2146–2245 (FSRI…APIF). N-linked (GlcNAc...) asparagine glycans are attached at residues Asn-2053, Asn-2129, Asn-2203, Asn-2382, Asn-2391, Asn-2410, Asn-2414, Asn-2431, Asn-2527, Asn-2530, Asn-2564, Asn-2621, Asn-2665, Asn-2712, Asn-2798, Asn-2809, Asn-2927, Asn-2976, and Asn-3045. Residues 3040 to 3205 (EISVRNGTSH…SSTGTSRNEC (166 aa)) enclose the Laminin G-like domain. Cys-3172 and Cys-3205 are oxidised to a cystine. Residues Asn-3222 and Asn-3225 are each glycosylated (N-linked (GlcNAc...) asparagine). A helical membrane pass occupies residues 3229-3250 (LILLITLALISLIGFSVCLLAI). The Cytoplasmic segment spans residues 3251–3343 (RRRWRQKSPG…RDGHINMAYL (93 aa)). A disordered region spans residues 3257 to 3277 (KSPGDQKQTERSNGWTGHVMP).

Expressed in the anchor cell.

The protein localises to the cell membrane. It localises to the basolateral cell membrane. It is found in the cell junction. Functionally, cell adhesion protein involved in the control of epithelial morphogenesis. Together with metalloproteinase zmp-1 and hemicentin him-4, plays a role in anchor cell (AC) invasion during postembryonic vulval development. The chain is Cadherin-3 (cdh-3) from Caenorhabditis elegans.